We begin with the raw amino-acid sequence, 2100 residues long: Autophagy-related protein 2 (2100 aa).

7 disordered regions span residues 101–129, 288–363, 410–492, 512–588, 674–694, 1474–1499, and 1969–1996; these read LPDK…HSVL, STVH…DSDD, IFPK…AVSQ, MSAM…HNSP, LPIS…GLND, PSHG…SASA, and DFLN…VDEG. Low complexity predominate over residues 300–320; sequence RPRSPQPSSSGSDSCGDMSRS. Over residues 335–346 the composition is skewed to basic and acidic residues; it reads VDSHGDESRHLE. A compositionally biased stretch (polar residues) spans 462–485; the sequence is DSATSARGKTPDCQTEQESPSTSK. Positions 512–522 are enriched in low complexity; the sequence is MSAMSQSSTTS. 2 stretches are compositionally biased toward basic and acidic residues: residues 535-546 and 555-565; these read KRIDTSDPDQKE and TEAKGASHDFD. Residues 1973–1985 show a composition bias toward low complexity; sequence SPRGSPSRPSTSD. Over residues 1986–1996 the composition is skewed to basic and acidic residues; that stretch reads GRWDDNGVDEG.

Belongs to the ATG2 family.

It is found in the preautophagosomal structure membrane. The protein resides in the endoplasmic reticulum membrane. It catalyses the reaction a 1,2-diacyl-sn-glycero-3-phosphocholine(in) = a 1,2-diacyl-sn-glycero-3-phosphocholine(out). The catalysed reaction is a 1,2-diacyl-sn-glycero-3-phospho-L-serine(in) = a 1,2-diacyl-sn-glycero-3-phospho-L-serine(out). The enzyme catalyses a 1,2-diacyl-sn-glycero-3-phosphoethanolamine(in) = a 1,2-diacyl-sn-glycero-3-phosphoethanolamine(out). Functionally, lipid transfer protein required for autophagosome completion and peroxisome degradation. Tethers the edge of the isolation membrane (IM) to the endoplasmic reticulum (ER) and mediates direct lipid transfer from ER to IM for IM expansion. ATG2 binds to the ER exit site (ERES), which is the membrane source for autophagosome formation, using basic residues in its N-terminal region (NR) and to the expanding edge of the IM through its C-terminal region. The latter binding is assisted by an ATG18-PtdIns3P interaction. ATG2 then extracts phospholipids from the membrane source using its NR and transfers them to ATG9 to the IM through its predicted beta-sheet-rich structure for membrane expansion. This chain is Autophagy-related protein 2 (ATG2), found in Coccidioides immitis (strain RS) (Valley fever fungus).